Here is a 473-residue protein sequence, read N- to C-terminus: MRHYYSVAAIRDAEASLLASLPDGVLMKRAAYGLASVIIRELAVRTGGVTGRRVCAVVGSGDNGGDALWAATFLRRRGAAADAVLLNPDRVHRKALVAFRKAGGRIVENVSAATDLVIDGVVGISGSGPLRPAAAAVFATVSASGVPVVAVDLPSGIDVVTGVINGPAVHAALTVTFGGLKPVHALADCGDVTLVDIGLDLPDSDILGLQAADVAAYWPVPGVHDDKYTQGVTGVLAGSSTYPGAAVLCTGAAVAATSGMVRYAGSAYTQVLAHWPEVIASATPTAAGRVQSWVVGPGLGIDATATAALWFALETDLPVLVDADGLTMLAAHPDLVINRNAPTVLTPHASEFARLAGTPPGDDRVGACRKLADSFGATVLLKGNVTVIADPGGPVYLNPAGQSWAATAGSGDVLSGMIGALLAAGLPAAEAAAAAAFVHARAAALSAADPGPGDVPTSASRMVSHIRTALAAL.

The interval 1-203 is NAD(P)H-hydrate epimerase; sequence MRHYYSVAAI…LVDIGLDLPD (203 aa). The YjeF N-terminal domain maps to 10-205; the sequence is IRDAEASLLA…DIGLDLPDSD (196 aa). The NADPHX 1; for epimerase activity stretch occupies residues 62-66; sequence DNGGD. K(+) is bound by residues N63 and D119. Residues 123–129 are NADPHX 1; for epimerase activity; that stretch reads GISGSGP. D152 provides a ligand contact to (6S)-NADPHX. S155 provides a ligand contact to K(+). Positions 210 to 473 constitute a YjeF C-terminal domain; it reads QAADVAAYWP…SHIRTALAAL (264 aa). Residues 210-473 form an ADP-dependent (S)-NAD(P)H-hydrate dehydratase region; that stretch reads QAADVAAYWP…SHIRTALAAL (264 aa). G298 provides a ligand contact to (6S)-NADPHX. Residues 348–354 are NADPHX 2; for dehydratase activity; sequence HASEFAR. ADP-binding positions include 382 to 386 and 402 to 411; these read KGNVT and QSWAATAGSG. D412 is a binding site for (6S)-NADPHX.

In the N-terminal section; belongs to the NnrE/AIBP family. The protein in the C-terminal section; belongs to the NnrD/CARKD family. K(+) serves as cofactor.

It carries out the reaction (6S)-NADHX + ADP = AMP + phosphate + NADH + H(+). It catalyses the reaction (6S)-NADPHX + ADP = AMP + phosphate + NADPH + H(+). The catalysed reaction is (6R)-NADHX = (6S)-NADHX. The enzyme catalyses (6R)-NADPHX = (6S)-NADPHX. Functionally, bifunctional enzyme that catalyzes the epimerization of the S- and R-forms of NAD(P)HX and the dehydration of the S-form of NAD(P)HX at the expense of ADP, which is converted to AMP. This allows the repair of both epimers of NAD(P)HX, a damaged form of NAD(P)H that is a result of enzymatic or heat-dependent hydration. The chain is Bifunctional NAD(P)H-hydrate repair enzyme Nnr (nnr) from Mycobacterium leprae (strain TN).